We begin with the raw amino-acid sequence, 411 residues long: Creatinase (411 aa).

Residue His240 is part of the active site.

It belongs to the peptidase M24 family. Creatinase subfamily. Homodimer.

The catalysed reaction is creatine + H2O = sarcosine + urea. The protein is Creatinase of Bacillus sp. (strain B-0618).